The primary structure comprises 76 residues: uncharacterized protein (76 aa).

This is an uncharacterized protein from Enterobacteria phage T4 (Bacteriophage T4).